The sequence spans 1922 residues: Kinesin-related protein 4 (1922 aa).

The region spanning 22-343 (KIKVAIRVRP…LQFAKRAKRV (322 aa)) is the Kinesin motor domain. 101–108 (GQTSSGKT) serves as a coordination point for ATP. The tract at residues 448–538 (QKIKKIKNSE…DDEFKDNLNL (91 aa)) is disordered. Residues 456-468 (SENNISSSSSNSS) are compositionally biased toward low complexity. Acidic residues-rich tracts occupy residues 469 to 480 (GEEDDDDKDDEN) and 488 to 532 (DKDD…DDEF). Positions 562–1712 (QVKVKREDLD…ELESTKQKNL (1151 aa)) form a coiled coil. The tract at residues 1887–1922 (TSTDNLTTTSTSLKSKSSSNGENKENQNNNIIIKNN) is disordered.

It belongs to the TRAFAC class myosin-kinesin ATPase superfamily. Kinesin family.

The protein resides in the cytoplasm. It is found in the cytoskeleton. Functionally, microtubule-associated force-producing protein that plays a role in organelle transport. Its motor activity is directed toward the microtubule's plus end. Cooperates with dynein in organizing spindle assembly during cell division. The chain is Kinesin-related protein 4 (kif4) from Dictyostelium discoideum (Social amoeba).